We begin with the raw amino-acid sequence, 182 residues long: Large ribosomal subunit protein bL25 (182 aa).

The protein belongs to the bacterial ribosomal protein bL25 family. CTC subfamily. As to quaternary structure, part of the 50S ribosomal subunit; part of the 5S rRNA/L5/L18/L25 subcomplex. Contacts the 5S rRNA. Binds to the 5S rRNA independently of L5 and L18.

In terms of biological role, this is one of the proteins that binds to the 5S RNA in the ribosome where it forms part of the central protuberance. The sequence is that of Large ribosomal subunit protein bL25 from Borreliella afzelii (strain PKo) (Borrelia afzelii).